A 231-amino-acid polypeptide reads, in one-letter code: Ion-translocating oxidoreductase complex subunit E (231 aa).

6 helical membrane-spanning segments follow: residues 18 to 38 (ALVQ…ATNA), 39 to 59 (LGLG…ISTL), 63 to 83 (TPAE…VSAV), 86 to 106 (LINA…PLIV), 125 to 145 (ALSA…MFVL), and 182 to 202 (PFLL…MLAG).

It belongs to the NqrDE/RnfAE family. In terms of assembly, the complex is composed of six subunits: RsxA, RsxB, RsxC, RsxD, RsxE and RsxG.

The protein resides in the cell inner membrane. In terms of biological role, part of a membrane-bound complex that couples electron transfer with translocation of ions across the membrane. Required to maintain the reduced state of SoxR. The protein is Ion-translocating oxidoreductase complex subunit E of Escherichia coli O127:H6 (strain E2348/69 / EPEC).